A 299-amino-acid chain; its full sequence is 4-diphosphocytidyl-2-C-methyl-D-erythritol kinase (299 aa).

Residue K22 is part of the active site. 108-118 (PVGAGLGGGSS) is an ATP binding site. D150 is an active-site residue.

This sequence belongs to the GHMP kinase family. IspE subfamily.

It catalyses the reaction 4-CDP-2-C-methyl-D-erythritol + ATP = 4-CDP-2-C-methyl-D-erythritol 2-phosphate + ADP + H(+). The protein operates within isoprenoid biosynthesis; isopentenyl diphosphate biosynthesis via DXP pathway; isopentenyl diphosphate from 1-deoxy-D-xylulose 5-phosphate: step 3/6. In terms of biological role, catalyzes the phosphorylation of the position 2 hydroxy group of 4-diphosphocytidyl-2C-methyl-D-erythritol. The polypeptide is 4-diphosphocytidyl-2-C-methyl-D-erythritol kinase (Desulfotalea psychrophila (strain LSv54 / DSM 12343)).